Reading from the N-terminus, the 338-residue chain is RAB6-interacting golgin (338 aa).

Composition is skewed to basic and acidic residues over residues 1–14 (MTEK…DEIL) and 46–59 (RMPD…DQLR). Disordered stretches follow at residues 1–109 (MTEK…LNLD) and 127–188 (ARDK…SPFK). 2 stretches are compositionally biased toward low complexity: residues 60-73 (KQQQ…IQKP) and 153-167 (SGGD…DDGS). Positions 192–244 (LKDFEQHRRMIEEQNKQKKQMLYQAIEQHTQKTAAESRKIEEIRHELSKLESD) form a coiled coil. Residues 244–260 (DLAVDVALLRKQIDNAC) form an essential for Sas-6 binding region. The necessary for localization to the centrosome stretch occupies residues 246 to 286 (AVDVALLRKQIDNACIHFANVEKQYVKIEAQFLRAKIELHN). The tract at residues 246-323 (AVDVALLRKQ…TELMQKVGLS (78 aa)) is necessary for localization to the Golgi. The tract at residues 260–286 (CIHFANVEKQYVKIEAQFLRAKIELHN) is necessary for interaction with Sas-6 and essential for homodimerization.

It belongs to the GORAB family. Homodimer (via C-terminus); dimerization appears to be required for its trans-Golgi localization but not for its function and centriolar localization. Interacts (via C-terminus) with Rab6; binds Rab6 as a homodimer, this interaction seems to be required for trans-Golgi localization. Interacts (via C-terminus) with Sas-6; binds as a monomer to a Sas-6 homodimer.

It localises to the cytoplasm. Its subcellular location is the cytoskeleton. The protein localises to the microtubule organizing center. The protein resides in the centrosome. It is found in the centriole. It localises to the golgi apparatus. Its subcellular location is the trans-Golgi network. Required for centriole duplication likely through its interaction with Sas-6. During embryogenesis, maternally provided protein is required for centrosome duplication and nuclear division cycles of the syncytial embryos. In femoral chordotonal organs, required for sensory cilia structural integrity and functionality necessary for motor coordination. In male germline, has a role in cytokinesis which seems dependent on its localization to the Golgi. The polypeptide is RAB6-interacting golgin (Drosophila melanogaster (Fruit fly)).